The sequence spans 293 residues: Protein YIF1A (293 aa).

Residues 1 to 33 are disordered; sequence MAYHSGYGAHGSKHRARAAPDPPPLFDDTSGGY. N-acetylalanine is present on alanine 2. Topologically, residues 2–138 are cytoplasmic; it reads AYHSGYGAHG…PPRQDLNAPD (137 aa). Serine 12 carries the post-translational modification Phosphoserine. Residues 139 to 159 form a helical membrane-spanning segment; it reads LYIPTMAFITYVLLAGMALGI. Residues 160–174 are Lumenal-facing; it reads QKRFSPEVLGLCAST. A helical membrane pass occupies residues 175 to 195; that stretch reads ALVWVVMEVLALLLGLYLATV. Residues 196–203 are Cytoplasmic-facing; sequence RSDLSTFH. The chain crosses the membrane as a helical span at residues 204-226; sequence LLAYSGYKYVGMILSVLTGLLFG. Topologically, residues 227–229 are lumenal; that stretch reads SDG. A helical membrane pass occupies residues 230–249; the sequence is YYVALAWTSSALMYFIVRSL. The Cytoplasmic portion of the chain corresponds to 250–271; it reads RTAALGPDSMGGPVPRQRLQLY. Residues 272-292 form a helical membrane-spanning segment; that stretch reads LTLGAAAFQPLIIYWLTFHLV.

This sequence belongs to the YIF1 family. As to quaternary structure, interacts with YIPF5.

The protein localises to the endoplasmic reticulum membrane. The protein resides in the golgi apparatus membrane. Its subcellular location is the endoplasmic reticulum-Golgi intermediate compartment membrane. Functionally, possible role in transport between endoplasmic reticulum and Golgi. The sequence is that of Protein YIF1A (YIF1A) from Homo sapiens (Human).